Consider the following 65-residue polypeptide: Keratin-associated protein 20-2 (65 aa).

It belongs to the KRTAP type 20 family. As to quaternary structure, interacts with hair keratins.

In terms of biological role, in the hair cortex, hair keratin intermediate filaments are embedded in an interfilamentous matrix, consisting of hair keratin-associated proteins (KRTAP), which are essential for the formation of a rigid and resistant hair shaft through their extensive disulfide bond cross-linking with abundant cysteine residues of hair keratins. The matrix proteins include the high-sulfur and high-glycine-tyrosine keratins. This chain is Keratin-associated protein 20-2 (KRTAP20-2), found in Homo sapiens (Human).